The chain runs to 228 residues: 7-cyano-7-deazaguanine synthase (228 aa).

9 to 19 contacts ATP; it reads LSGGPDSTTVL. Zn(2+) contacts are provided by cysteine 193, cysteine 203, cysteine 206, and cysteine 209.

The protein belongs to the QueC family. Zn(2+) is required as a cofactor.

The enzyme catalyses 7-carboxy-7-deazaguanine + NH4(+) + ATP = 7-cyano-7-deazaguanine + ADP + phosphate + H2O + H(+). It participates in purine metabolism; 7-cyano-7-deazaguanine biosynthesis. Functionally, catalyzes the ATP-dependent conversion of 7-carboxy-7-deazaguanine (CDG) to 7-cyano-7-deazaguanine (preQ(0)). The chain is 7-cyano-7-deazaguanine synthase from Rickettsia rickettsii (strain Iowa).